The chain runs to 393 residues: ATP phosphoribosyltransferase regulatory subunit (393 aa).

It belongs to the class-II aminoacyl-tRNA synthetase family. HisZ subfamily. As to quaternary structure, heteromultimer composed of HisG and HisZ subunits.

It localises to the cytoplasm. Its pathway is amino-acid biosynthesis; L-histidine biosynthesis; L-histidine from 5-phospho-alpha-D-ribose 1-diphosphate: step 1/9. Its function is as follows. Required for the first step of histidine biosynthesis. May allow the feedback regulation of ATP phosphoribosyltransferase activity by histidine. The chain is ATP phosphoribosyltransferase regulatory subunit from Nitrosospira multiformis (strain ATCC 25196 / NCIMB 11849 / C 71).